The sequence spans 231 residues: Glutathione-S-transferase (231 aa).

One can recognise a GST N-terminal domain in the interval 15-98; it reads LFAVKGTATS…YIADAYDKDG (84 aa).

The protein belongs to the GST superfamily.

It carries out the reaction RX + glutathione = an S-substituted glutathione + a halide anion + H(+). Conjugation of reduced glutathione to a wide number of exogenous and endogenous hydrophobic electrophiles. This chain is Glutathione-S-transferase, found in Alternaria alternata (Alternaria rot fungus).